The following is a 449-amino-acid chain: MATKVEEINKLKKKNLHFRQCSADSLSNSSMQFDLSGLNTPVGELATSNLPSPAHPPFGELHQESRTSNSSAMHIENVVASRLMYNEVANGSFALEPKNILVVTKPRKHSLVYKTAEITKYILTIGTPETKVYVDMRLARSKRFSAHNIAKEANTDIDRIKYWNPYICLIKPSIFDLAITIGDNSTLLYTSWLFQKIGPPVLSFSDDDVPGFLTHFSLSNYQQHLYQVLTQNVSLRFCSRLQCSFHKYDEKTKQYSLASTTYSLDEILISRGEHPFISNLNVYNNSELMTVVQADGLVVATPTGSTNISANAGGSLVHPALNAILVTPVCPHTLSFRPIILPDYNVLNVEIPLDSRSSAFFSVDRHESVEMHRGDYLSIVTSHYPFTTIQNPGYQWTKVLEDKFNWNVRERQKPFSRKPSLSDVKDTSDDKFDITDNSYCREFSADIDG.

A Phosphoserine modification is found at serine 420.

This sequence belongs to the NAD kinase family.

The protein resides in the cytoplasm. Its subcellular location is the nucleus. This is an uncharacterized protein from Schizosaccharomyces pombe (strain 972 / ATCC 24843) (Fission yeast).